Reading from the N-terminus, the 280-residue chain is Energy-coupling factor transporter ATP-binding protein EcfA1 (280 aa).

The 235-residue stretch at 7–241 (IEVAHLKYEY…GQRLLDLGLD (235 aa)) folds into the ABC transporter domain. 41–48 (GHNGSGKS) is an ATP binding site.

It belongs to the ABC transporter superfamily. Energy-coupling factor EcfA family. Forms a stable energy-coupling factor (ECF) transporter complex composed of 2 membrane-embedded substrate-binding proteins (S component), 2 ATP-binding proteins (A component) and 2 transmembrane proteins (T component).

Its subcellular location is the cell membrane. Its function is as follows. ATP-binding (A) component of a common energy-coupling factor (ECF) ABC-transporter complex. Unlike classic ABC transporters this ECF transporter provides the energy necessary to transport a number of different substrates. This is Energy-coupling factor transporter ATP-binding protein EcfA1 from Latilactobacillus sakei subsp. sakei (strain 23K) (Lactobacillus sakei subsp. sakei).